The following is a 196-amino-acid chain: Nucleoid occlusion factor SlmA (196 aa).

The HTH tetR-type domain maps to Pro-7–Ile-68. The H-T-H motif DNA-binding region spans Thr-31 to Phe-50. The stretch at Arg-71 to Leu-93 forms a coiled coil.

The protein belongs to the nucleoid occlusion factor SlmA family. As to quaternary structure, homodimer. Interacts with FtsZ.

Its subcellular location is the cytoplasm. The protein localises to the nucleoid. In terms of biological role, required for nucleoid occlusion (NO) phenomenon, which prevents Z-ring formation and cell division over the nucleoid. Acts as a DNA-associated cell division inhibitor that binds simultaneously chromosomal DNA and FtsZ, and disrupts the assembly of FtsZ polymers. SlmA-DNA-binding sequences (SBS) are dispersed on non-Ter regions of the chromosome, preventing FtsZ polymerization at these regions. This chain is Nucleoid occlusion factor SlmA, found in Aliivibrio fischeri (strain MJ11) (Vibrio fischeri).